A 154-amino-acid chain; its full sequence is Ribonuclease HI (154 aa).

The 142-residue stretch at 1–142 folds into the RNase H type-1 domain; it reads MTKHVEIFTD…CDELARTAAE (142 aa). Asp10, Glu48, Asp70, and Asp134 together coordinate Mg(2+).

The protein belongs to the RNase H family. Monomer. Mg(2+) is required as a cofactor.

The protein resides in the cytoplasm. It catalyses the reaction Endonucleolytic cleavage to 5'-phosphomonoester.. In terms of biological role, endonuclease that specifically degrades the RNA of RNA-DNA hybrids. This chain is Ribonuclease HI, found in Vibrio parahaemolyticus serotype O3:K6 (strain RIMD 2210633).